Here is a 146-residue protein sequence, read N- to C-terminus: 3-hydroxyacyl-[acyl-carrier-protein] dehydratase FabZ (146 aa).

H47 is a catalytic residue.

This sequence belongs to the thioester dehydratase family. FabZ subfamily.

Its subcellular location is the cytoplasm. The enzyme catalyses a (3R)-hydroxyacyl-[ACP] = a (2E)-enoyl-[ACP] + H2O. Functionally, involved in unsaturated fatty acids biosynthesis. Catalyzes the dehydration of short chain beta-hydroxyacyl-ACPs and long chain saturated and unsaturated beta-hydroxyacyl-ACPs. The sequence is that of 3-hydroxyacyl-[acyl-carrier-protein] dehydratase FabZ from Nitrosospira multiformis (strain ATCC 25196 / NCIMB 11849 / C 71).